The following is a 293-amino-acid chain: MVVSVPATSANLGPGFDCLGLSLNLRNRFFIEPSNIHAVKLVGEGEGIPKFLTNNIFTKVFYEILKKHGNDGSFKFLLHNKVPITRGMGSSSAMIVGAVASAFAFLGFAFDRENILNTALIYENHPDNITPAVFGGYNAAFVEKKKVISLKTKIPSFLKAVMVIPNRVISTKQSRHLLPKRYSVQESVFNLSHASLMTMAIVQGKWDLLRCCSKDRMHQYKRMQTYPVLFAIQKLALENNALMSTLSGSGSSFFNMCYEEDAPKLKQVLSKKFPKFRVAVLDFDNDGVLIEKD.

83-93 lines the ATP pocket; the sequence is PITRGMGSSSA.

The protein belongs to the GHMP kinase family. Homoserine kinase subfamily.

The protein resides in the cytoplasm. The enzyme catalyses L-homoserine + ATP = O-phospho-L-homoserine + ADP + H(+). Its pathway is amino-acid biosynthesis; L-threonine biosynthesis; L-threonine from L-aspartate: step 4/5. In terms of biological role, catalyzes the ATP-dependent phosphorylation of L-homoserine to L-homoserine phosphate. In Helicobacter pylori (strain J99 / ATCC 700824) (Campylobacter pylori J99), this protein is Homoserine kinase.